Here is a 206-residue protein sequence, read N- to C-terminus: Ribosome maturation factor RimM (206 aa).

The PRC barrel domain maps to 113–206 (DDEYYWVDLI…RIDSNWPTEL (94 aa)).

The protein belongs to the RimM family. As to quaternary structure, binds ribosomal protein uS19.

Its subcellular location is the cytoplasm. In terms of biological role, an accessory protein needed during the final step in the assembly of 30S ribosomal subunit, possibly for assembly of the head region. Essential for efficient processing of 16S rRNA. May be needed both before and after RbfA during the maturation of 16S rRNA. It has affinity for free ribosomal 30S subunits but not for 70S ribosomes. This Bordetella petrii (strain ATCC BAA-461 / DSM 12804 / CCUG 43448) protein is Ribosome maturation factor RimM.